Reading from the N-terminus, the 471-residue chain is Citrate synthase, mitochondrial (471 aa).

Residues His309, His355, and Asp409 contribute to the active site.

Belongs to the citrate synthase family. As to quaternary structure, homodimer. As to expression, ubiquitous.

The protein localises to the mitochondrion matrix. It carries out the reaction oxaloacetate + acetyl-CoA + H2O = citrate + CoA + H(+). It functions in the pathway carbohydrate metabolism; tricarboxylic acid cycle; isocitrate from oxaloacetate: step 1/2. This is Citrate synthase, mitochondrial from Solanum tuberosum (Potato).